Reading from the N-terminus, the 275-residue chain is Large ribosomal subunit protein uL2 (275 aa).

A disordered region spans residues 225-275; the sequence is MNPIDHPHGGGEGRTSGGRHPVTPWGKPTKGKKTRSNKKTDRLIMRRRQTQ.

Belongs to the universal ribosomal protein uL2 family. In terms of assembly, part of the 50S ribosomal subunit. Forms a bridge to the 30S subunit in the 70S ribosome.

In terms of biological role, one of the primary rRNA binding proteins. Required for association of the 30S and 50S subunits to form the 70S ribosome, for tRNA binding and peptide bond formation. It has been suggested to have peptidyltransferase activity; this is somewhat controversial. Makes several contacts with the 16S rRNA in the 70S ribosome. This Paramagnetospirillum magneticum (strain ATCC 700264 / AMB-1) (Magnetospirillum magneticum) protein is Large ribosomal subunit protein uL2.